Consider the following 739-residue polypeptide: Phosphoribosylformylglycinamidine synthase subunit PurL (739 aa).

Histidine 54 is a catalytic residue. ATP contacts are provided by tyrosine 57 and lysine 96. Mg(2+) is bound at residue glutamate 98. Substrate-binding positions include 99–102 and arginine 121; that span reads SHNH. The active-site Proton acceptor is the histidine 100. Aspartate 122 lines the Mg(2+) pocket. Glutamine 245 contacts substrate. Position 273 (aspartate 273) interacts with Mg(2+). 317–319 serves as a coordination point for substrate; sequence ESQ. The ATP site is built by aspartate 500 and glycine 537. Asparagine 538 contributes to the Mg(2+) binding site. Substrate is bound at residue serine 540.

Belongs to the FGAMS family. In terms of assembly, monomer. Part of the FGAM synthase complex composed of 1 PurL, 1 PurQ and 2 PurS subunits.

It localises to the cytoplasm. The catalysed reaction is N(2)-formyl-N(1)-(5-phospho-beta-D-ribosyl)glycinamide + L-glutamine + ATP + H2O = 2-formamido-N(1)-(5-O-phospho-beta-D-ribosyl)acetamidine + L-glutamate + ADP + phosphate + H(+). It participates in purine metabolism; IMP biosynthesis via de novo pathway; 5-amino-1-(5-phospho-D-ribosyl)imidazole from N(2)-formyl-N(1)-(5-phospho-D-ribosyl)glycinamide: step 1/2. Its function is as follows. Part of the phosphoribosylformylglycinamidine synthase complex involved in the purines biosynthetic pathway. Catalyzes the ATP-dependent conversion of formylglycinamide ribonucleotide (FGAR) and glutamine to yield formylglycinamidine ribonucleotide (FGAM) and glutamate. The FGAM synthase complex is composed of three subunits. PurQ produces an ammonia molecule by converting glutamine to glutamate. PurL transfers the ammonia molecule to FGAR to form FGAM in an ATP-dependent manner. PurS interacts with PurQ and PurL and is thought to assist in the transfer of the ammonia molecule from PurQ to PurL. The polypeptide is Phosphoribosylformylglycinamidine synthase subunit PurL (Bacillus cytotoxicus (strain DSM 22905 / CIP 110041 / 391-98 / NVH 391-98)).